The primary structure comprises 205 residues: Dephospho-CoA kinase (205 aa).

In terms of domain architecture, DPCK spans 7–205 (IIGITGRIAS…QEIINYERFE (199 aa)). 15–20 (ASGKDA) contributes to the ATP binding site.

The protein belongs to the CoaE family.

It is found in the cytoplasm. It carries out the reaction 3'-dephospho-CoA + ATP = ADP + CoA + H(+). It participates in cofactor biosynthesis; coenzyme A biosynthesis; CoA from (R)-pantothenate: step 5/5. In terms of biological role, catalyzes the phosphorylation of the 3'-hydroxyl group of dephosphocoenzyme A to form coenzyme A. This is Dephospho-CoA kinase from Borrelia garinii subsp. bavariensis (strain ATCC BAA-2496 / DSM 23469 / PBi) (Borreliella bavariensis).